Reading from the N-terminus, the 443-residue chain is CBL-interacting protein kinase 29 (443 aa).

Residues 32–292 (YELGGLLGRG…TEEIITHPWF (261 aa)) form the Protein kinase domain. Residues 38-46 (LGRGASAKV) and Lys61 each bind ATP. The active-site Proton acceptor is the Asp164. Positions 182–207 (DFGLGAVADGALHHTLCGTPAYVAPE) are activation loop. Positions 313 to 347 (AKFKTEFKEDDMARDMTAFDILACSPGSDLSGLFG) constitute an NAF domain. Residues 350-379 (PGKERVFVGEPAAAVLSRVEEAGKKEGYMV) are PPI.

This sequence belongs to the protein kinase superfamily. CAMK Ser/Thr protein kinase family. SNF1 subfamily. Mn(2+) is required as a cofactor.

The enzyme catalyses L-seryl-[protein] + ATP = O-phospho-L-seryl-[protein] + ADP + H(+). It catalyses the reaction L-threonyl-[protein] + ATP = O-phospho-L-threonyl-[protein] + ADP + H(+). Functionally, CIPK serine-threonine protein kinases interact with CBL proteins. Binding of a CBL protein to the regulatory NAF domain of CIPK protein lead to the activation of the kinase in a calcium-dependent manner. The sequence is that of CBL-interacting protein kinase 29 (CIPK29) from Oryza sativa subsp. japonica (Rice).